The primary structure comprises 528 residues: Extracellular serine/threonine protein CG31145 (528 aa).

The Cytoplasmic portion of the chain corresponds to 1-12 (MAVLRTMKLKER). Residues 1 to 76 (MAVLRTMKLK…LHEFKRKFLQ (76 aa)) constitute a propeptide that is removed on maturation. The chain crosses the membrane as a helical span at residues 13–33 (LVISLGATLVLLTLLLIVDVQ). The Lumenal portion of the chain corresponds to 34-528 (MDFGVANRHL…VDGSETDVSS (495 aa)). The disordered stretch occupies residues 77 to 130 (KSNASGSKEASTQAGASQSGGATSGQDAAAGASGGAAGPGTSRSTSTRKPTPHD). Residue N79 is glycosylated (N-linked (GlcNAc...) asparagine). The span at 86-107 (ASTQAGASQSGGATSGQDAAAG) shows a compositional bias: low complexity. N173 carries an N-linked (GlcNAc...) asparagine glycan. ATP contacts are provided by Q220, K236, and E257. E257 provides a ligand contact to Mn(2+). N-linked (GlcNAc...) asparagine glycosylation occurs at N286. Intrachain disulfides connect C312–C328 and C317–C321. 339-342 (AAFL) contributes to the ATP binding site. 2 disulfide bridges follow: C376-C450 and C451-C510. D408 is a catalytic residue. Residue E413 coordinates ATP. N420 is a glycosylation site (N-linked (GlcNAc...) asparagine). D428 provides a ligand contact to ATP. Residue D428 coordinates Mn(2+).

It belongs to the FAM20 family. Requires Mn(2+) as cofactor. As to expression, in embryos, prominently expressed in midline glia, salivary gland, intestine and dorsal vessel (heart). Not associated with biomineralization.

The protein localises to the golgi apparatus membrane. It is found in the secreted. It carries out the reaction L-seryl-[protein] + ATP = O-phospho-L-seryl-[protein] + ADP + H(+). The enzyme catalyses L-threonyl-[protein] + ATP = O-phospho-L-threonyl-[protein] + ADP + H(+). In terms of biological role, golgi serine/threonine protein kinase that phosphorylates secretory pathway proteins within Ser-x-Glu/pSer motifs. This Drosophila melanogaster (Fruit fly) protein is Extracellular serine/threonine protein CG31145.